The primary structure comprises 120 residues: UPF0344 protein LMHCC_0278 (120 aa).

4 helical membrane passes run 3 to 23 (GYIH…ALLI), 33 to 53 (MLQM…IMMV), 62 to 82 (ILAI…EMLL), and 92 to 112 (GMFL…GFYL).

The protein belongs to the UPF0344 family.

It localises to the cell membrane. In Listeria monocytogenes serotype 4a (strain HCC23), this protein is UPF0344 protein LMHCC_0278.